Reading from the N-terminus, the 807-residue chain is Spondin-1 (807 aa).

The N-terminal stretch at 1-28 is a signal peptide; sequence MRLSPAPLKLSRTPALLALALPLAAALA. The 166-residue stretch at 29-194 folds into the Reelin domain; sequence FSDETLDKVP…DSTFDGVTDK (166 aa). 17 disulfides stabilise this stretch: C44–C128, C156–C182, C199–C336, C200–C340, C202–C415, C443–C480, C454–C489, C459–C494, C502–C538, C513–C517, C548–C554, C559–C595, C570–C574, C605–C610, C615–C650, C626–C630, and C660–C665. The 194-residue stretch at 195-388 folds into the Spondin domain; sequence PILDCCACGT…LTSLDHPQSP (194 aa). A glycan (N-linked (GlcNAc...) asparagine) is linked at N214. Ca(2+) contacts are provided by D325, D354, and D358. TSP type-1 domains follow at residues 442 to 495, 501 to 555, 558 to 611, 614 to 666, 668 to 721, and 754 to 806; these read TCIY…PGCS, TCTM…EECS, SCLM…PECH, PCLL…PECP, DCEL…RKCL, and GCRM…NVHP. W448 carries C-linked (Man) tryptophan glycosylation. A C-linked (Man) tryptophan; partial glycan is attached at W451. C-linked (Man) tryptophan glycosylation occurs at W507. W510 carries C-linked (Man) tryptophan; partial glycosylation. W564 carries a C-linked (Man) tryptophan glycan. The C-linked (Man) tryptophan; partial glycan is linked to W620. C-linked (Man) tryptophan glycosylation occurs at W623. Residue W674 is glycosylated (C-linked (Man) tryptophan). N681 carries an N-linked (GlcNAc...) asparagine glycan.

Binds to the central extracellular domain of APP and inhibits beta-secretase cleavage of APP. In terms of tissue distribution, highest expression in lung, lower expression in brain, heart, kidney, liver and testis, and lowest expression in pancreas, skeletal muscle and ovary. Not expressed in spleen.

The protein resides in the secreted. It localises to the extracellular space. The protein localises to the extracellular matrix. Its function is as follows. Cell adhesion protein that promotes the attachment of spinal cord and sensory neuron cells and the outgrowth of neurites in vitro. May contribute to the growth and guidance of axons in both the spinal cord and the PNS. Major factor for vascular smooth muscle cell. The protein is Spondin-1 (SPON1) of Homo sapiens (Human).